The chain runs to 351 residues: L-threonine 3-dehydrogenase (351 aa).

Residue cysteine 39 participates in Zn(2+) binding. Catalysis depends on charge relay system residues threonine 41 and histidine 44. Positions 64, 65, 94, 97, 100, and 108 each coordinate Zn(2+). NAD(+)-binding positions include isoleucine 176, aspartate 196, arginine 201, 271–273 (LGI), and 295–296 (IY).

This sequence belongs to the zinc-containing alcohol dehydrogenase family. In terms of assembly, homotetramer. It depends on Zn(2+) as a cofactor.

Its subcellular location is the cytoplasm. The catalysed reaction is L-threonine + NAD(+) = (2S)-2-amino-3-oxobutanoate + NADH + H(+). It functions in the pathway amino-acid degradation; L-threonine degradation via oxydo-reductase pathway; glycine from L-threonine: step 1/2. Functionally, catalyzes the NAD(+)-dependent oxidation of L-threonine to 2-amino-3-ketobutyrate. The chain is L-threonine 3-dehydrogenase from Francisella tularensis subsp. tularensis (strain SCHU S4 / Schu 4).